Here is a 165-residue protein sequence, read N- to C-terminus: Lipoprotein signal peptidase (165 aa).

A run of 5 helical transmembrane segments spans residues 10 to 30 (LKWL…KYWV), 42 to 62 (VLPG…GLFT), 71 to 91 (LFVW…YKLI), 105 to 125 (IGGA…VDFI), and 133 to 153 (HWPT…IVTI). Catalysis depends on residues aspartate 123 and aspartate 141.

Belongs to the peptidase A8 family.

It localises to the cell inner membrane. The catalysed reaction is Release of signal peptides from bacterial membrane prolipoproteins. Hydrolyzes -Xaa-Yaa-Zaa-|-(S,diacylglyceryl)Cys-, in which Xaa is hydrophobic (preferably Leu), and Yaa (Ala or Ser) and Zaa (Gly or Ala) have small, neutral side chains.. It participates in protein modification; lipoprotein biosynthesis (signal peptide cleavage). Functionally, this protein specifically catalyzes the removal of signal peptides from prolipoproteins. This is Lipoprotein signal peptidase from Blochmanniella pennsylvanica (strain BPEN).